The following is a 237-amino-acid chain: Ribitol-5-phosphate cytidylyltransferase (237 aa).

CTP is bound by residues 7-10 (LAGG) and 80-86 (GEDRNET).

The protein belongs to the IspD/TarI cytidylyltransferase family. TarI subfamily.

It carries out the reaction D-ribitol 5-phosphate + CTP + H(+) = CDP-L-ribitol + diphosphate. It participates in cell wall biogenesis; poly(ribitol phosphate) teichoic acid biosynthesis. Catalyzes the transfer of the cytidylyl group of CTP to D-ribitol 5-phosphate. This is Ribitol-5-phosphate cytidylyltransferase from Listeria monocytogenes serotype 4b (strain F2365).